Consider the following 229-residue polypeptide: 3-isopropylmalate dehydratase small subunit (229 aa).

The segment at 208–229 is disordered; that stretch reads KIESAREPDDDWTGPLADRGII.

The protein belongs to the LeuD family. LeuD type 1 subfamily. In terms of assembly, heterodimer of LeuC and LeuD.

It carries out the reaction (2R,3S)-3-isopropylmalate = (2S)-2-isopropylmalate. It participates in amino-acid biosynthesis; L-leucine biosynthesis; L-leucine from 3-methyl-2-oxobutanoate: step 2/4. Its function is as follows. Catalyzes the isomerization between 2-isopropylmalate and 3-isopropylmalate, via the formation of 2-isopropylmaleate. This Bifidobacterium longum subsp. infantis (strain ATCC 15697 / DSM 20088 / JCM 1222 / NCTC 11817 / S12) protein is 3-isopropylmalate dehydratase small subunit.